Reading from the N-terminus, the 385-residue chain is Multidrug resistance protein MdtE (385 aa).

The first 20 residues, 1–20 (MNRRRKLLIPLLFCGAMLTA), serve as a signal peptide directing secretion. Cys21 carries the N-palmitoyl cysteine lipid modification. Cys21 carries S-diacylglycerol cysteine lipidation.

It belongs to the membrane fusion protein (MFP) (TC 8.A.1) family. In terms of assembly, homotrimer. Part of the tripartite efflux system MdtEF-TolC, which is composed of an inner membrane transporter, MdtF, a membrane fusion protein, MdtE, and an outer membrane component, TolC. The complex forms a large protein conduit and can translocate molecules across both the inner and outer membranes.

It localises to the cell inner membrane. Part of the tripartite efflux system MdtEF-TolC, which confers resistance to various compounds. The sequence is that of Multidrug resistance protein MdtE (mdtE) from Escherichia coli O6:H1 (strain CFT073 / ATCC 700928 / UPEC).